A 208-amino-acid polypeptide reads, in one-letter code: Thymidylate kinase (208 aa).

ATP is bound at residue 10–17; that stretch reads GPDGSGKT.

Belongs to the thymidylate kinase family.

The catalysed reaction is dTMP + ATP = dTDP + ADP. In terms of biological role, phosphorylation of dTMP to form dTDP in both de novo and salvage pathways of dTTP synthesis. This chain is Thymidylate kinase, found in Listeria monocytogenes serotype 4a (strain HCC23).